Here is a 301-residue protein sequence, read N- to C-terminus: Glutathione transport system permease protein GsiD (301 aa).

6 helical membrane passes run 37–57, 103–123, 141–161, 162–182, 220–240, and 264–284; these read VAVA…WAQY, LAAG…LGLL, VLFA…MGSG, MANV…RLVR, IVVF…SLSF, and VIAP…VLAF. One can recognise an ABC transmembrane type-1 domain in the interval 99–288; the sequence is TRISLAAGIF…LTVLAFNLLG (190 aa).

It belongs to the binding-protein-dependent transport system permease family. As to quaternary structure, the complex is composed of two ATP-binding proteins (GsiA), two transmembrane proteins (GsiC and GsiD) and a solute-binding protein (GsiB).

It localises to the cell inner membrane. In terms of biological role, part of the ABC transporter complex GsiABCD involved in glutathione import. Probably responsible for the translocation of the substrate across the membrane. The polypeptide is Glutathione transport system permease protein GsiD (Pectobacterium atrosepticum (strain SCRI 1043 / ATCC BAA-672) (Erwinia carotovora subsp. atroseptica)).